The following is a 354-amino-acid chain: Histidinol-phosphate aminotransferase (354 aa).

The residue at position 210 (lysine 210) is an N6-(pyridoxal phosphate)lysine.

This sequence belongs to the class-II pyridoxal-phosphate-dependent aminotransferase family. Histidinol-phosphate aminotransferase subfamily. Homodimer. Pyridoxal 5'-phosphate serves as cofactor.

It carries out the reaction L-histidinol phosphate + 2-oxoglutarate = 3-(imidazol-4-yl)-2-oxopropyl phosphate + L-glutamate. It participates in amino-acid biosynthesis; L-histidine biosynthesis; L-histidine from 5-phospho-alpha-D-ribose 1-diphosphate: step 7/9. This chain is Histidinol-phosphate aminotransferase, found in Clostridium botulinum (strain Kyoto / Type A2).